The following is a 311-amino-acid chain: Protein nfe2 (311 aa).

In terms of biological role, responsible for the nodulation efficiency and competitive ability of strain GR4 on alfalfa roots. In Rhizobium meliloti (Ensifer meliloti), this protein is Protein nfe2 (nfe2).